A 627-amino-acid chain; its full sequence is Bromodomain adjacent to zinc finger domain protein 1A (627 aa).

A PHD-type zinc finger spans residues 222–272 (NARCKVCRKKGDGESMVLCDGCDRGHHIYCVRPKLKYVPEGDWFCPECHPK). The interval 270 to 503 (HPKQRSHRLP…NRRSSGRHHG (234 aa)) is disordered. Positions 272–283 (KQRSHRLPSRHR) are enriched in basic residues. Positions 281 to 327 (RHRYSMDSDEEEEEELDQKEEEEEEEEQEELSESENEQEDEMSEEES) form a coiled coil. Residues 287-326 (DSDEEEEEELDQKEEEEEEEEQEELSESENEQEDEMSEEE) show a composition bias toward acidic residues. Positions 348–359 (TGKLGPKPKTGK) are enriched in low complexity. Polar residues-rich tracts occupy residues 386–395 (EPTSRLSASD) and 402–412 (SPNSSLVNVVT). The span at 417-431 (GRGKGKGRGRGRGRL) shows a compositional bias: basic residues. Over residues 486–496 (DISSLEQGNRR) the composition is skewed to polar residues. The 104-residue stretch at 502-605 (HGVHELSACE…SFFITEAQNL (104 aa)) folds into the Bromo domain.

This sequence belongs to the WAL family. Together with p18 and p20 proteins, it forms the Xenopus version of CHRAC. Post-translationally, phosphorylated in mitosis.

The protein resides in the nucleus. Its function is as follows. Regulatory subunit of a chromatin remodeling complex, which forms ordered nucleosome arrays on chromatin and slides edge- and center-positioned histone octamers away from their original location on the DNA template to facilitate access to DNA during DNA-templated processes such as DNA replication, transcription, and repair. Involved in regulating the spacing of nucleosomes along the chromatin and have the ability to slide mononucleosomes to the center of a DNA template in an ATP-dependent manner. May play a role in transcriptional regulation. This chain is Bromodomain adjacent to zinc finger domain protein 1A (baz1a), found in Xenopus laevis (African clawed frog).